The sequence spans 219 residues: ATP-dependent dethiobiotin synthetase BioD (219 aa).

Residue 14 to 19 (DVGKTY) coordinates ATP. Threonine 18 lines the Mg(2+) pocket. Lysine 37 is a catalytic residue. Substrate is bound at residue serine 41. ATP is bound by residues aspartate 54, 114–117 (EGAG), and 175–176 (NN). Aspartate 54 and glutamate 114 together coordinate Mg(2+).

This sequence belongs to the dethiobiotin synthetase family. In terms of assembly, homodimer. It depends on Mg(2+) as a cofactor.

The protein localises to the cytoplasm. The catalysed reaction is (7R,8S)-7,8-diammoniononanoate + CO2 + ATP = (4R,5S)-dethiobiotin + ADP + phosphate + 3 H(+). It functions in the pathway cofactor biosynthesis; biotin biosynthesis; biotin from 7,8-diaminononanoate: step 1/2. Functionally, catalyzes a mechanistically unusual reaction, the ATP-dependent insertion of CO2 between the N7 and N8 nitrogen atoms of 7,8-diaminopelargonic acid (DAPA, also called 7,8-diammoniononanoate) to form a ureido ring. This Fusobacterium nucleatum subsp. nucleatum (strain ATCC 25586 / DSM 15643 / BCRC 10681 / CIP 101130 / JCM 8532 / KCTC 2640 / LMG 13131 / VPI 4355) protein is ATP-dependent dethiobiotin synthetase BioD.